The sequence spans 277 residues: Energy-coupling factor transporter ATP-binding protein EcfA1 (277 aa).

In terms of domain architecture, ABC transporter spans 5-243 (IRAQNVSFCY…VEVLKKIGLD (239 aa)). 42–49 (GHNGSGKS) serves as a coordination point for ATP.

The protein belongs to the ABC transporter superfamily. Energy-coupling factor EcfA family. Forms a stable energy-coupling factor (ECF) transporter complex composed of 2 membrane-embedded substrate-binding proteins (S component), 2 ATP-binding proteins (A component) and 2 transmembrane proteins (T component).

Its subcellular location is the cell membrane. Functionally, ATP-binding (A) component of a common energy-coupling factor (ECF) ABC-transporter complex. Unlike classic ABC transporters this ECF transporter provides the energy necessary to transport a number of different substrates. This chain is Energy-coupling factor transporter ATP-binding protein EcfA1, found in Caldanaerobacter subterraneus subsp. tengcongensis (strain DSM 15242 / JCM 11007 / NBRC 100824 / MB4) (Thermoanaerobacter tengcongensis).